The chain runs to 43 residues: Protein PsbN 1 (43 aa).

Residues 3 to 23 (TATILGILIAAAVVGITVLAL) traverse the membrane as a helical segment.

It belongs to the PsbN family.

The protein resides in the cellular thylakoid membrane. Functionally, may play a role in photosystem I and II biogenesis. This chain is Protein PsbN 1, found in Microcystis aeruginosa (strain NIES-843 / IAM M-2473).